Here is a 147-residue protein sequence, read N- to C-terminus: Hemoglobin subunit beta (147 aa).

Residues 2 to 147 enclose the Globin domain; the sequence is EWTDAERSAI…VVSALCRQYH (146 aa). Heme b contacts are provided by His-63 and His-92.

Belongs to the globin family. As to quaternary structure, heterotetramer of two alpha chains and two beta chains. As to expression, red blood cells.

Its function is as follows. Involved in oxygen transport from gills to the various peripheral tissues. The chain is Hemoglobin subunit beta (hbb) from Carassius auratus (Goldfish).